The chain runs to 596 residues: Probable tripeptidyl-peptidase SED2 (596 aa).

The N-terminal stretch at M1–A16 is a signal peptide. Residues K17–A203 constitute a propeptide, removed in mature form. A Peptidase S53 domain is found at L210–P596. N265 carries an N-linked (GlcNAc...) asparagine glycan. Residues E286 and D290 each act as charge relay system in the active site. N403 carries N-linked (GlcNAc...) asparagine glycosylation. The active-site Charge relay system is S501. Positions 543 and 544 each coordinate Ca(2+). A glycan (N-linked (GlcNAc...) asparagine) is linked at N572. Ca(2+) is bound by residues G576 and D578.

It depends on Ca(2+) as a cofactor.

The protein resides in the secreted. The protein localises to the extracellular space. It catalyses the reaction Release of an N-terminal tripeptide from a polypeptide.. Secreted tripeptidyl-peptidase which degrades proteins at acidic pHs and is involved in virulence. This chain is Probable tripeptidyl-peptidase SED2 (SED2), found in Trichophyton verrucosum (strain HKI 0517).